We begin with the raw amino-acid sequence, 61 residues long: MNINKESIHGFLKQCERVLRISKKPDNEEYLTVAKVTGVGIIIIGLIGFILSIVSQVLFYS.

The chain crosses the membrane as a helical span at residues 39-59 (VGIIIIGLIGFILSIVSQVLF).

Belongs to the SecE/SEC61-gamma family. In terms of assembly, component of the Sec protein translocase complex. Heterotrimer consisting of SecY (alpha), SecG (beta) and SecE (gamma) subunits. The heterotrimers can form oligomers, although 1 heterotrimer is thought to be able to translocate proteins. Interacts with the ribosome. May interact with SecDF, and other proteins may be involved.

The protein localises to the cell membrane. Essential subunit of the Sec protein translocation channel SecYEG. Clamps together the 2 halves of SecY. May contact the channel plug during translocation. The polypeptide is Protein translocase subunit SecE (Methanosphaera stadtmanae (strain ATCC 43021 / DSM 3091 / JCM 11832 / MCB-3)).